Reading from the N-terminus, the 286-residue chain is Forkhead box protein E3 (286 aa).

Positions 1–62 (MDAHVAFSGF…GRRRRRPLQR (62 aa)) are disordered. The fork-head DNA-binding region spans 64–158 (KPPYSYIALI…DNGSFLRRRK (95 aa)).

The protein localises to the nucleus. Its function is as follows. Transcription factor that controls lens epithelial cell growth through regulation of proliferation, apoptosis and cell cycle. During lens development, controls the ratio of the lens fiber cells to the cells of the anterior lens epithelium by regulating the rate of proliferation and differentiation. Controls lens vesicle closure and subsequent separation of the lens vesicle from ectoderm. Controls the expression of DNAJB1 in a pathway that is crucial for the development of the anterior segment of the eye. This is Forkhead box protein E3 (Foxe3) from Rattus norvegicus (Rat).